A 2372-amino-acid polypeptide reads, in one-letter code: Nonribosomal peptide synthase roqA (2372 aa).

Residues 217-610 (EHCRSQPDAE…VGRKDREVKI (394 aa)) form an adenylation 1 region. The tract at residues 723-745 (AASSHSSTREQPSNQRDKEDVEL) is disordered. The span at 725–736 (SSHSSTREQPSN) shows a compositional bias: polar residues. The region spanning 750 to 823 (SAKENTLCSV…KIARCTAESK (74 aa)) is the Carrier 1 domain. At serine 784 the chain carries O-(pantetheine 4'-phosphoryl)serine. The tract at residues 856 to 1122 (EDIYPCTPLQ…FATFPFRTQL (267 aa)) is condensation 1. The adenylation 2 stretch occupies residues 1290-1679 (QPNSEAVCAW…VGRKDTQVKL (390 aa)). One can recognise a Carrier 2 domain in the interval 1819 to 1895 (KPTTEQERFV…LFCKHVILIQ (77 aa)). An O-(pantetheine 4'-phosphoryl)serine modification is found at serine 1856. The interval 1962 to 2227 (TSNYTSTAIF…FNVLPCRIAI (266 aa)) is condensation 2.

The protein operates within alkaloid biosynthesis. In terms of biological role, dipeptide synthase; part of the gene cluster that mediates the biosynthesis of the mycotoxins roquefortine C and meleagrin. The first stage is catalyzed by the dipeptide synthase roqA which condenses histidine and tryptophan to produce histidyltryptophanyldiketopiperazine (HTD). HTD is then converted to roquefortine C through two possible pathways. In the first pathway, prenyltransferase roqD transforms HTD to the intermediate roquefortine D, which is in turn converted to roquefortine C by the cytochrome P450 monooxygenase roqR. In the second pathway, HTD is first converted to the intermediate dehydrohistidyltryptophanyldi-ketopiperazine (DHTD) by roqR which is then prenylated by roqD to form roquefortine C. Roquefortine C can be further transformed to meleagrin via three more reactions including oxydation to glandicolin A by roqM, which is further reduced to glandicoline B by roqO. Finally, glandicoline B is converted to meleagrin by the glandicoline B O-methyltransferase roqN. More studies identified further branching and additional metabolites produced by the roquefortine/meleagrin cluster, including roquefortine F, roquefortine L, roquefortine M, roquefortine N and neoxaline. The protein is Nonribosomal peptide synthase roqA of Penicillium rubens (strain ATCC 28089 / DSM 1075 / NRRL 1951 / Wisconsin 54-1255) (Penicillium chrysogenum).